The primary structure comprises 617 residues: MGPVDTSQRLARLRELMQERKVDVYIVPSEDSHQSEYIAPCDGRREFISGFTGSAGCAIVSMSKAALSTDGRYFNQAAKQLDNNWMLLKRGFENMPTWQEWTAEQAEGGKVVGVDPSLITASEARSLSETIEKSGGSLQGVQENLIDLVWGKERPARPSEKVALHPIEFAGKSFEEKISDLRKELQKKKSAGFVISMLDEIAWLFNLRGNDIPYNPVFFAYAIITPTTADLYIDDEKLPAEVKKYLGDQVSVKPYGSIFEDAKALSQSAQKKSDGDASTSPSEKFLISTKASWSLSLALGGEKNVEEVRSPITDAKAIKNEAELEGMRACHIRDGAALTEYFAWLENELVNKKTVLNEVDGSDKLEQIRSKHKHFVGLSFDTISSTGPNAAVIHYKAERDTCSIIDPKAVYLCDSGAQYLDGTTDTTRTLHFGEPTEMERKAYTLVLKGLISIDTAVFPKGTTGFALDAFARQHLWKEGLDYLHGTGHGVGSYLNVHEGPIGLGTRVQYAEVAITPGNVISDEPGFYEDGVFGIRIENIIIAKEVKTTHGFGEKPWLGFEHVTMTPLCQKLINPSLLTDGEKKWVNDYHSKVWEKTSSYFENDELTRNWLKRETQPI.

Mn(2+) contacts are provided by aspartate 414, aspartate 425, glutamate 523, and glutamate 537.

This sequence belongs to the peptidase M24B family. Mn(2+) is required as a cofactor.

The catalysed reaction is Release of any N-terminal amino acid, including proline, that is linked to proline, even from a dipeptide or tripeptide.. In terms of biological role, catalyzes the removal of a penultimate prolyl residue from the N-termini of peptides. This is Probable Xaa-Pro aminopeptidase P (AMPP) from Ajellomyces dermatitidis (strain ER-3 / ATCC MYA-2586) (Blastomyces dermatitidis).